A 259-amino-acid chain; its full sequence is Phosphate import ATP-binding protein PstB (259 aa).

The ABC transporter domain maps to 11–254; that stretch reads AEARNLNFYY…PQDKRTEDYI (244 aa). 43 to 50 serves as a coordination point for ATP; that stretch reads GPSGCGKS.

The protein belongs to the ABC transporter superfamily. Phosphate importer (TC 3.A.1.7) family. The complex is composed of two ATP-binding proteins (PstB), two transmembrane proteins (PstC and PstA) and a solute-binding protein (PstS).

Its subcellular location is the cell inner membrane. The catalysed reaction is phosphate(out) + ATP + H2O = ADP + 2 phosphate(in) + H(+). In terms of biological role, part of the ABC transporter complex PstSACB involved in phosphate import. Responsible for energy coupling to the transport system. The sequence is that of Phosphate import ATP-binding protein PstB from Dechloromonas aromatica (strain RCB).